The sequence spans 587 residues: Dynein axonemal intermediate chain 2 (587 aa).

WD repeat units lie at residues 214–254, 261–302, 362–401, and 405–445; these read RPAS…NPVE, SHRD…EPTE, GHHGPIYSIQRNPFFPKNFLTVGDWTARIWSEDCRESSIM, and YHTS…NNPS. Disordered regions lie at residues 519–542 and 562–587; these read LKERSKAEPGEEVKDEKPAEDMKE and KEQQEIKQSEDEHQEKEVSEEKIVHE.

The protein belongs to the dynein intermediate chain family. Consists of at least two heavy chains and a number of intermediate and light chains. Interacts with DNAAF2. Interacts with DNAAF6/PIH1D3. Interacts with HEATR2; probably involved in outer arm dynein assembly. Interacts with C16ORF71/DAAP1.

It is found in the cytoplasm. The protein localises to the cytoskeleton. The protein resides in the cilium axoneme. It localises to the dynein axonemal particle. Part of the dynein complex of multiciliated cell cilia. The sequence is that of Dynein axonemal intermediate chain 2 (dnai2) from Xenopus laevis (African clawed frog).